We begin with the raw amino-acid sequence, 553 residues long: Putative transport protein YidE (553 aa).

5 consecutive transmembrane segments (helical) span residues 4–24 (IALT…IGNI), 28–48 (GVGF…HFVD), 65–85 (FGLI…FFAS), 95–115 (LFAV…HKIF), and 158–178 (MSYA…MWLM). RCK C-terminal domains follow at residues 192 to 276 (KHES…VIGK) and 279 to 361 (DTSL…VVGN). 5 consecutive transmembrane segments (helical) span residues 371-391 (MLPV…PLFV), 403-425 (AGGP…LYWF), 437-457 (LGIV…FVNT), 464-484 (LSWI…VGLL), and 533-553 (LVMF…WGIG).

The protein belongs to the AAE transporter (TC 2.A.81) family. YidE subfamily.

It localises to the cell membrane. This is Putative transport protein YidE from Salmonella arizonae (strain ATCC BAA-731 / CDC346-86 / RSK2980).